A 174-amino-acid chain; its full sequence is ATP synthase subunit b (174 aa).

Residues 15–33 traverse the membrane as a helical segment; it reads NPGLVIWTLVTFSVVVFVL.

It belongs to the ATPase B chain family. F-type ATPases have 2 components, F(1) - the catalytic core - and F(0) - the membrane proton channel. F(1) has five subunits: alpha(3), beta(3), gamma(1), delta(1), epsilon(1). F(0) has three main subunits: a(1), b(2) and c(10-14). The alpha and beta chains form an alternating ring which encloses part of the gamma chain. F(1) is attached to F(0) by a central stalk formed by the gamma and epsilon chains, while a peripheral stalk is formed by the delta and b chains.

It localises to the cell inner membrane. Functionally, f(1)F(0) ATP synthase produces ATP from ADP in the presence of a proton or sodium gradient. F-type ATPases consist of two structural domains, F(1) containing the extramembraneous catalytic core and F(0) containing the membrane proton channel, linked together by a central stalk and a peripheral stalk. During catalysis, ATP synthesis in the catalytic domain of F(1) is coupled via a rotary mechanism of the central stalk subunits to proton translocation. In terms of biological role, component of the F(0) channel, it forms part of the peripheral stalk, linking F(1) to F(0). This chain is ATP synthase subunit b, found in Leptospira biflexa serovar Patoc (strain Patoc 1 / Ames).